The sequence spans 513 residues: ATP synthase subunit alpha (513 aa).

169 to 176 (GDRQIGKT) provides a ligand contact to ATP.

This sequence belongs to the ATPase alpha/beta chains family. F-type ATPases have 2 components, CF(1) - the catalytic core - and CF(0) - the membrane proton channel. CF(1) has five subunits: alpha(3), beta(3), gamma(1), delta(1), epsilon(1). CF(0) has three main subunits: a(1), b(2) and c(9-12). The alpha and beta chains form an alternating ring which encloses part of the gamma chain. CF(1) is attached to CF(0) by a central stalk formed by the gamma and epsilon chains, while a peripheral stalk is formed by the delta and b chains.

It localises to the cell inner membrane. It catalyses the reaction ATP + H2O + 4 H(+)(in) = ADP + phosphate + 5 H(+)(out). Functionally, produces ATP from ADP in the presence of a proton gradient across the membrane. The alpha chain is a regulatory subunit. The protein is ATP synthase subunit alpha of Francisella tularensis subsp. novicida (strain U112).